The following is a 165-amino-acid chain: Methylated-DNA--protein-cysteine methyltransferase (165 aa).

Residue Cys126 is the Nucleophile; methyl group acceptor of the active site.

It belongs to the MGMT family.

The protein localises to the cytoplasm. It carries out the reaction a 6-O-methyl-2'-deoxyguanosine in DNA + L-cysteinyl-[protein] = S-methyl-L-cysteinyl-[protein] + a 2'-deoxyguanosine in DNA. The enzyme catalyses a 4-O-methyl-thymidine in DNA + L-cysteinyl-[protein] = a thymidine in DNA + S-methyl-L-cysteinyl-[protein]. Functionally, involved in the cellular defense against the biological effects of O6-methylguanine (O6-MeG) and O4-methylthymine (O4-MeT) in DNA. Repairs the methylated nucleobase in DNA by stoichiometrically transferring the methyl group to a cysteine residue in the enzyme. This is a suicide reaction: the enzyme is irreversibly inactivated. The polypeptide is Methylated-DNA--protein-cysteine methyltransferase (Mycobacterium leprae (strain TN)).